Here is a 463-residue protein sequence, read N- to C-terminus: 3-phosphoshikimate 1-carboxyvinyltransferase (463 aa).

3-phosphoshikimate is bound by residues Lys-26, Ser-27, and Arg-31. Lys-26 lines the phosphoenolpyruvate pocket. Phosphoenolpyruvate contacts are provided by Gly-99 and Arg-127. Ser-163, Ser-164, Gln-165, Ser-188, Asp-300, and Lys-327 together coordinate 3-phosphoshikimate. Position 165 (Gln-165) interacts with phosphoenolpyruvate. The active-site Proton acceptor is the Asp-300. Positions 331 and 372 each coordinate phosphoenolpyruvate.

The protein belongs to the EPSP synthase family. Monomer.

Its subcellular location is the cytoplasm. The enzyme catalyses 3-phosphoshikimate + phosphoenolpyruvate = 5-O-(1-carboxyvinyl)-3-phosphoshikimate + phosphate. The protein operates within metabolic intermediate biosynthesis; chorismate biosynthesis; chorismate from D-erythrose 4-phosphate and phosphoenolpyruvate: step 6/7. Catalyzes the transfer of the enolpyruvyl moiety of phosphoenolpyruvate (PEP) to the 5-hydroxyl of shikimate-3-phosphate (S3P) to produce enolpyruvyl shikimate-3-phosphate and inorganic phosphate. This chain is 3-phosphoshikimate 1-carboxyvinyltransferase, found in Burkholderia pseudomallei (Pseudomonas pseudomallei).